A 223-amino-acid chain; its full sequence is Small ribosomal subunit protein uS5 (223 aa).

Residues M1–A15 are compositionally biased toward low complexity. The tract at residues M1–K51 is disordered. The segment covering T16 to K51 has biased composition (basic and acidic residues). The S5 DRBM domain maps to F54–V117.

It belongs to the universal ribosomal protein uS5 family. Part of the 30S ribosomal subunit. Contacts proteins S4 and S8.

Its function is as follows. With S4 and S12 plays an important role in translational accuracy. In terms of biological role, located at the back of the 30S subunit body where it stabilizes the conformation of the head with respect to the body. This is Small ribosomal subunit protein uS5 from Paenarthrobacter aurescens (strain TC1).